A 233-amino-acid polypeptide reads, in one-letter code: Large ribosomal subunit protein eL6x (233 aa).

Positions 48-72 (HDAKSKVDAPVEKPPKFYPAEDVKK) are enriched in basic and acidic residues. Positions 48 to 80 (HDAKSKVDAPVEKPPKFYPAEDVKKPLPNRRTA) are disordered.

The protein belongs to the eukaryotic ribosomal protein eL6 family.

The chain is Large ribosomal subunit protein eL6x (RPL6C) from Arabidopsis thaliana (Mouse-ear cress).